A 301-amino-acid chain; its full sequence is uncharacterized protein (301 aa).

The protein belongs to the asfivirus E301R family. Interacts with host IRF3.

Plays a role in the inhibition of host innate immune system by acting as a negatively regulator of type I interferon production. Mechanistically, interacts with and prevents host IRF3 nuclear localization to inhibit its transcriptional activity. This is an uncharacterized protein from African swine fever virus (isolate Pig/Kenya/KEN-50/1950) (ASFV).